Reading from the N-terminus, the 1258-residue chain is Non-secreted LysM effector LysM19 (1258 aa).

Positions 148 to 168 are disordered; sequence VTQSLPNISSHEKRDDHEGNS. Positions 157-168 are enriched in basic and acidic residues; it reads SHEKRDDHEGNS. 2 consecutive LysM domains span residues 1028–1073 and 1179–1227; these read IVYT…SICL and RWHV…AYCT.

This sequence belongs to the secreted LysM effector family.

Non-secreted LysM effector that might be involved in manipulation of host defenses for successful infection. In Penicillium expansum (Blue mold rot fungus), this protein is Non-secreted LysM effector LysM19.